The primary structure comprises 316 residues: Olfactory receptor 2AG1 (316 aa).

Topologically, residues 1 to 25 (MELWNFTLGSGFILVGILNDSGSPE) are extracellular. N-linked (GlcNAc...) asparagine glycosylation is found at Asn5 and Asn19. A helical membrane pass occupies residues 26-49 (LLCATITILYLLALISNGLLLLAI). The Cytoplasmic segment spans residues 50-57 (TMEARLHM). The chain crosses the membrane as a helical span at residues 58–79 (PMYLLLGQLSLMDLLFTSVVTP). Over 80–100 (KALADFLRRENTISFGGCALQ) the chain is Extracellular. The cysteines at positions 97 and 189 are disulfide-linked. The helical transmembrane segment at 101–120 (MFLALTMGGAEDLLLAFMAY) threads the bilayer. At 121–139 (DRYVAICHPLTYMTLMSSR) the chain is on the cytoplasmic side. The helical transmembrane segment at 140–158 (ACWLMVATSWILASLSALI) threads the bilayer. The Extracellular portion of the chain corresponds to 159–195 (YTVYTMHYPFCRAQEIRHLLCEIPHLLKVACADTSRY). A helical transmembrane segment spans residues 196–219 (ELMVYVMGVTFLIPSLAAILASYT). Residues 220 to 236 (QILLTVLHMPSNEGRKK) are Cytoplasmic-facing. Residues 237-259 (ALVTCSSHLTVVGMFYGAATFMY) traverse the membrane as a helical segment. Residues 260–272 (VLPSSFHSTRQDN) are Extracellular-facing. A helical transmembrane segment spans residues 273–292 (IISVFYTIVTPALNPLIYSL). At 293-316 (RNKEVMRALRRVLGKYMLPAHSTL) the chain is on the cytoplasmic side.

Belongs to the G-protein coupled receptor 1 family.

It localises to the cell membrane. Odorant receptor. The sequence is that of Olfactory receptor 2AG1 (OR2AG1) from Homo sapiens (Human).